The chain runs to 384 residues: MIWQEKIDAALDARRVADALRRRYPVAQGAGRWLVADDCQYLNFSSNDYLGLSHHPQIIRAWQQGAEQFGVGSGGSGHVSGYSVAHQVLEEELAEWLGYSRALLFISGFAANQAVIAAMMAKEDRIVADRLSHASLLEAASLSPSPLRRFAHNDVTHLARLLASPCPGQQLVVTEGVFSMDGDSAPLEEIQQVTQQHDGWLMVDDAHGTGVIGEQGRGSCWLQKVKPELLVVTFGKGFGVSGAAVLCSNTVADYLLQFARHLIYSTSMPPAQAQALRASLAVIRSDEGDARREKLAALITRFRAGVQDLPFTLADSWSAIQPLIVGDNSRALQLAEKLRQQGCWVTAIRPPTVPAGTARLRLTLTAAHEMQDIDRLLEVLHGNG.

Residue Arg-21 coordinates substrate. 108–109 lines the pyridoxal 5'-phosphate pocket; it reads GF. Residue His-133 coordinates substrate. 3 residues coordinate pyridoxal 5'-phosphate: Ser-179, His-207, and Thr-233. Lys-236 bears the N6-(pyridoxal phosphate)lysine mark. Position 352 (Thr-352) interacts with substrate.

It belongs to the class-II pyridoxal-phosphate-dependent aminotransferase family. BioF subfamily. As to quaternary structure, homodimer. Pyridoxal 5'-phosphate is required as a cofactor.

It catalyses the reaction 6-carboxyhexanoyl-[ACP] + L-alanine + H(+) = (8S)-8-amino-7-oxononanoate + holo-[ACP] + CO2. Its pathway is cofactor biosynthesis; biotin biosynthesis. Catalyzes the decarboxylative condensation of pimeloyl-[acyl-carrier protein] and L-alanine to produce 8-amino-7-oxononanoate (AON), [acyl-carrier protein], and carbon dioxide. The protein is 8-amino-7-oxononanoate synthase of Escherichia coli O6:K15:H31 (strain 536 / UPEC).